We begin with the raw amino-acid sequence, 286 residues long: Phosphatidylserine decarboxylase proenzyme (286 aa).

Residues D91, H148, and S251 each act as charge relay system; for autoendoproteolytic cleavage activity in the active site. S251 (schiff-base intermediate with substrate; via pyruvic acid; for decarboxylase activity) is an active-site residue. S251 is subject to Pyruvic acid (Ser); by autocatalysis.

Belongs to the phosphatidylserine decarboxylase family. PSD-B subfamily. Prokaryotic type I sub-subfamily. In terms of assembly, heterodimer of a large membrane-associated beta subunit and a small pyruvoyl-containing alpha subunit. Pyruvate is required as a cofactor. Is synthesized initially as an inactive proenzyme. Formation of the active enzyme involves a self-maturation process in which the active site pyruvoyl group is generated from an internal serine residue via an autocatalytic post-translational modification. Two non-identical subunits are generated from the proenzyme in this reaction, and the pyruvate is formed at the N-terminus of the alpha chain, which is derived from the carboxyl end of the proenzyme. The autoendoproteolytic cleavage occurs by a canonical serine protease mechanism, in which the side chain hydroxyl group of the serine supplies its oxygen atom to form the C-terminus of the beta chain, while the remainder of the serine residue undergoes an oxidative deamination to produce ammonia and the pyruvoyl prosthetic group on the alpha chain. During this reaction, the Ser that is part of the protease active site of the proenzyme becomes the pyruvoyl prosthetic group, which constitutes an essential element of the active site of the mature decarboxylase.

It is found in the cell membrane. It catalyses the reaction a 1,2-diacyl-sn-glycero-3-phospho-L-serine + H(+) = a 1,2-diacyl-sn-glycero-3-phosphoethanolamine + CO2. It functions in the pathway phospholipid metabolism; phosphatidylethanolamine biosynthesis; phosphatidylethanolamine from CDP-diacylglycerol: step 2/2. In terms of biological role, catalyzes the formation of phosphatidylethanolamine (PtdEtn) from phosphatidylserine (PtdSer). The protein is Phosphatidylserine decarboxylase proenzyme of Marinobacter nauticus (strain ATCC 700491 / DSM 11845 / VT8) (Marinobacter aquaeolei).